A 156-amino-acid polypeptide reads, in one-letter code: 6,7-dimethyl-8-ribityllumazine synthase (156 aa).

Residues Phe-23, 57-59 (SFE), and 81-83 (AVI) each bind 5-amino-6-(D-ribitylamino)uracil. Position 86-87 (86-87 (GT)) interacts with (2S)-2-hydroxy-3-oxobutyl phosphate. The active-site Proton donor is the His-89. Phe-114 is a binding site for 5-amino-6-(D-ribitylamino)uracil. A (2S)-2-hydroxy-3-oxobutyl phosphate-binding site is contributed by Arg-128.

The protein belongs to the DMRL synthase family. In terms of assembly, forms an icosahedral capsid composed of 60 subunits, arranged as a dodecamer of pentamers.

The enzyme catalyses (2S)-2-hydroxy-3-oxobutyl phosphate + 5-amino-6-(D-ribitylamino)uracil = 6,7-dimethyl-8-(1-D-ribityl)lumazine + phosphate + 2 H2O + H(+). It functions in the pathway cofactor biosynthesis; riboflavin biosynthesis; riboflavin from 2-hydroxy-3-oxobutyl phosphate and 5-amino-6-(D-ribitylamino)uracil: step 1/2. Its function is as follows. Catalyzes the formation of 6,7-dimethyl-8-ribityllumazine by condensation of 5-amino-6-(D-ribitylamino)uracil with 3,4-dihydroxy-2-butanone 4-phosphate. This is the penultimate step in the biosynthesis of riboflavin. The chain is 6,7-dimethyl-8-ribityllumazine synthase from Alkalilimnicola ehrlichii (strain ATCC BAA-1101 / DSM 17681 / MLHE-1).